Reading from the N-terminus, the 364-residue chain is Glutamine synthetase (364 aa).

In terms of domain architecture, GS beta-grasp spans 15–94 (VLAEYIWIDA…VLAECWNNDG (80 aa)). The GS catalytic domain maps to 101 to 364 (HRHECAKLMS…ETKRGEEEGF (264 aa)).

The protein belongs to the glutamine synthetase family. In terms of assembly, homooctamer.

It is found in the cytoplasm. It catalyses the reaction L-glutamate + NH4(+) + ATP = L-glutamine + ADP + phosphate + H(+). The sequence is that of Glutamine synthetase (GLN1) from Yarrowia lipolytica (strain CLIB 122 / E 150) (Yeast).